The chain runs to 374 residues: Serine/threonine-protein kinase-transforming protein mos (374 aa).

The Protein kinase domain occupies 94 to 370 (VCLMHRLGSG…LLQRDLKAFR (277 aa)). Residues 100 to 108 (LGSGGFGSV) and lysine 121 contribute to the ATP site. Aspartate 229 (proton acceptor) is an active-site residue.

This sequence belongs to the protein kinase superfamily. Ser/Thr protein kinase family.

The catalysed reaction is L-seryl-[protein] + ATP = O-phospho-L-seryl-[protein] + ADP + H(+). It catalyses the reaction L-threonyl-[protein] + ATP = O-phospho-L-threonyl-[protein] + ADP + H(+). This is Serine/threonine-protein kinase-transforming protein mos (V-MOS) from Mus musculus (Mouse).